The chain runs to 1137 residues: AP-4 complex subunit epsilon-1 (1137 aa).

Ser700 and Ser857 each carry phosphoserine. The interaction with TEPSIN stretch occupies residues 727-1137; it reads SGALPVPQES…YQCQKVMEGS (411 aa).

It belongs to the adaptor complexes large subunit family. As to quaternary structure, adaptor protein complex 4 (AP-4) is a heterotetramer composed of two large adaptins (epsilon-type subunit AP4E1 and beta-type subunit AP4B1), a medium adaptin (mu-type subunit AP4M1) and a small adaptin (sigma-type AP4S1). Interacts with TEPSIN. Interacts with GRIA2; probably indirect it mediates the somatodendritic localization of GRIA2 in neurons. In terms of tissue distribution, widely expressed.

Its subcellular location is the golgi apparatus. The protein resides in the trans-Golgi network membrane. Component of the adaptor protein complex 4 (AP-4). Adaptor protein complexes are vesicle coat components involved both in vesicle formation and cargo selection. They control the vesicular transport of proteins in different trafficking pathways. AP-4 forms a non clathrin-associated coat on vesicles departing the trans-Golgi network (TGN) and may be involved in the targeting of proteins from the trans-Golgi network (TGN) to the endosomal-lysosomal system. It is also involved in protein sorting to the basolateral membrane in epithelial cells and the proper asymmetric localization of somatodendritic proteins in neurons. AP-4 is involved in the recognition and binding of tyrosine-based sorting signals found in the cytoplasmic part of cargos, but may also recognize other types of sorting signal. This Homo sapiens (Human) protein is AP-4 complex subunit epsilon-1.